Consider the following 122-residue polypeptide: S-adenosylmethionine decarboxylase proenzyme (122 aa).

Residue serine 69 is the Schiff-base intermediate with substrate; via pyruvic acid of the active site. Position 69 is a pyruvic acid (Ser); by autocatalysis (serine 69). The active-site Proton acceptor; for processing activity is histidine 74. Catalysis depends on cysteine 89, which acts as the Proton donor; for catalytic activity.

Belongs to the prokaryotic AdoMetDC family. Type 1 subfamily. In terms of assembly, heterotetramer of two alpha and two beta chains arranged as a dimer of alpha/beta heterodimers. Pyruvate serves as cofactor. Post-translationally, is synthesized initially as an inactive proenzyme. Formation of the active enzyme involves a self-maturation process in which the active site pyruvoyl group is generated from an internal serine residue via an autocatalytic post-translational modification. Two non-identical subunits are generated from the proenzyme in this reaction, and the pyruvate is formed at the N-terminus of the alpha chain, which is derived from the carboxyl end of the proenzyme. The post-translation cleavage follows an unusual pathway, termed non-hydrolytic serinolysis, in which the side chain hydroxyl group of the serine supplies its oxygen atom to form the C-terminus of the beta chain, while the remainder of the serine residue undergoes an oxidative deamination to produce ammonia and the pyruvoyl group blocking the N-terminus of the alpha chain.

It carries out the reaction S-adenosyl-L-methionine + H(+) = S-adenosyl 3-(methylsulfanyl)propylamine + CO2. Its pathway is amine and polyamine biosynthesis; S-adenosylmethioninamine biosynthesis; S-adenosylmethioninamine from S-adenosyl-L-methionine: step 1/1. Catalyzes the decarboxylation of S-adenosylmethionine to S-adenosylmethioninamine (dcAdoMet), the propylamine donor required for the synthesis of the polyamines spermine and spermidine from the diamine putrescine. The sequence is that of S-adenosylmethionine decarboxylase proenzyme from Saccharolobus islandicus (strain L.S.2.15 / Lassen #1) (Sulfolobus islandicus).